A 283-amino-acid chain; its full sequence is Adenylate dimethylallyltransferase (283 aa).

The protein belongs to the isopentenyl transferase family.

The catalysed reaction is dimethylallyl diphosphate + AMP = N(6)-(dimethylallyl)adenosine 5'-phosphate + diphosphate. Transfers dimethylallyl groups to AMP as part of the biosynthesis of cytokinin phytohormones like isopentenyl adenine or discadenine which controle spore formation and viability. This is Adenylate dimethylallyltransferase (iptA) from Dictyostelium discoideum (Social amoeba).